The primary structure comprises 90 residues: uncharacterized protein (90 aa).

Residues 32–52 (IIINLIPLVLLFAFFCPCIYF) form a helical membrane-spanning segment.

The protein localises to the membrane. This is an uncharacterized protein from Schizosaccharomyces pombe (strain 972 / ATCC 24843) (Fission yeast).